A 117-amino-acid polypeptide reads, in one-letter code: Large ribosomal subunit protein uL18 (117 aa).

It belongs to the universal ribosomal protein uL18 family. In terms of assembly, part of the 50S ribosomal subunit; part of the 5S rRNA/L5/L18/L25 subcomplex. Contacts the 5S and 23S rRNAs.

Its function is as follows. This is one of the proteins that bind and probably mediate the attachment of the 5S RNA into the large ribosomal subunit, where it forms part of the central protuberance. The polypeptide is Large ribosomal subunit protein uL18 (Onion yellows phytoplasma (strain OY-M)).